We begin with the raw amino-acid sequence, 624 residues long: MLLINFFIAVLGVISLSPIVVARYILRRDCTTVTVLSSPESVTGSNHVQLASYEMCGSTLSASLYVYNDDYDKIVTLYYLTSSGTTGSTLALILPVWSNNWELWTLSAIAAGAVEITGASYVDSDTSVTYTTSLDLPLTTTSASVPTGTAANWRGRSIYQVVTDRFARTDGSITYSCDVTDRVYCGGSYRGIINMLDYIQGMGFTAIWISPIVENIPDDTGYGYAYHGYWMKDIFALNTNFGGADDLIALATELHNRGMYLMVDIVVNHFAFSGNHADVDYSEYFPYSSQDYFHSFCWITDYSNQTNVEECWLGDDSVPLVDVNTQLDTVKSEYQSWVKQLIANYSIDGLRIDTVKHVQMDFWAPFQEAAGIYTVGEVFDGDPSYTCPYQENLDGVLNYPVYYPVVSAFQRVGGSISSLVDMIDTLKSECIDTTLLGSFLENQDNPRFPSYTSDESLIKNAIAFTILSDGIPIIYYGQEQGLNGGNDPYNREALWPTGYSTTSTFYEYIASLNQIRNHAIYIDDTYLTYQNWVIYSDSTTIAMRKGFTGNQIITVLSNLGSSGSSYTLTLSNTGYTASSVVYEILTCTAVTVDLSGNLAVPMSGGLPRVFYPESQLVGSGICSM.

The N-terminal stretch at 1-28 is a signal peptide; the sequence is MLLINFFIAVLGVISLSPIVVARYILRR. The CBM21 domain occupies 40–133; that stretch reads ESVTGSNHVQ…SDTSVTYTTS (94 aa). A disulfide bridge links Cys177 with Cys185. Trp230 lines the substrate pocket. A Ca(2+)-binding site is contributed by Asn268. His269 provides a ligand contact to substrate. Residues Cys297 and Cys311 are joined by a disulfide bond. An N-linked (GlcNAc...) asparagine glycan is attached at Asn304. Residues Glu309 and Asp322 each coordinate Ca(2+). A glycan (N-linked (GlcNAc...) asparagine) is linked at Asn344. A substrate-binding site is contributed by Arg351. Ca(2+) contacts are provided by Asp353, His357, and Glu377. The Nucleophile role is filled by Asp353. 356-357 serves as a coordination point for substrate; it reads KH. Glu377 functions as the Proton donor in the catalytic mechanism. A substrate-binding site is contributed by Gly381. Cys387 and Cys430 are disulfide-bonded. Substrate contacts are provided by Asp444 and Arg491. Cys587 and Cys622 are oxidised to a cystine.

This sequence belongs to the glycosyl hydrolase 13 family. Requires Ca(2+) as cofactor.

The protein resides in the secreted. The catalysed reaction is Endohydrolysis of (1-&gt;4)-alpha-D-glucosidic linkages in polysaccharides containing three or more (1-&gt;4)-alpha-linked D-glucose units.. This chain is Alpha-amylase 1 (LKA1), found in Lipomyces kononenkoae (Yeast).